The following is a 247-amino-acid chain: ATP synthase subunit a, chloroplastic (247 aa).

The next 5 helical transmembrane spans lie at 38–58 (QVLI…TVAV), 95–115 (VPFI…GALL), 134–154 (INTT…AGLT), 199–219 (LVVV…VMFL), and 220–240 (GLFT…AYIG).

This sequence belongs to the ATPase A chain family. F-type ATPases have 2 components, CF(1) - the catalytic core - and CF(0) - the membrane proton channel. CF(1) has five subunits: alpha(3), beta(3), gamma(1), delta(1), epsilon(1). CF(0) has four main subunits: a, b, b' and c.

Its subcellular location is the plastid. It localises to the chloroplast thylakoid membrane. In terms of biological role, key component of the proton channel; it plays a direct role in the translocation of protons across the membrane. This Platanus occidentalis (Sycamore) protein is ATP synthase subunit a, chloroplastic.